Consider the following 461-residue polypeptide: Cysteine--tRNA ligase (461 aa).

Cys28 provides a ligand contact to Zn(2+). Residues 30–40 (ITVYDLCHIGH) carry the 'HIGH' region motif. Residues Cys209, His234, and Glu238 each coordinate Zn(2+). Residues 266–270 (KMSKS) carry the 'KMSKS' region motif. Lys269 is an ATP binding site.

It belongs to the class-I aminoacyl-tRNA synthetase family. In terms of assembly, monomer. It depends on Zn(2+) as a cofactor.

The protein resides in the cytoplasm. It carries out the reaction tRNA(Cys) + L-cysteine + ATP = L-cysteinyl-tRNA(Cys) + AMP + diphosphate. This chain is Cysteine--tRNA ligase, found in Escherichia coli O17:K52:H18 (strain UMN026 / ExPEC).